A 410-amino-acid chain; its full sequence is Arginine deiminase (410 aa).

C400 (amidino-cysteine intermediate) is an active-site residue.

The protein belongs to the arginine deiminase family.

It localises to the cytoplasm. It carries out the reaction L-arginine + H2O = L-citrulline + NH4(+). It functions in the pathway amino-acid degradation; L-arginine degradation via ADI pathway; carbamoyl phosphate from L-arginine: step 1/2. This chain is Arginine deiminase, found in Bacillus cereus (strain G9842).